The primary structure comprises 917 residues: Major intrinsically disordered Notch2-binding receptor 1 (917 aa).

Over 1–892 the chain is Cytoplasmic; it reads MEANQEASLF…AEFRRAKVCK (892 aa). 7 disordered regions span residues 337–367, 388–410, 461–483, 568–588, 652–687, 706–727, and 746–783; these read STYFGPTPVMGTQDTRRCPGRSSKQTPWPAK, PSEEKLRYPNSGSQTPNFSGPDR, SCTSGQHSSDTSSVGTQTEQHVL, ITNGVSSGKGDKCNRPENVHH, SEAPSDDSASPRVFRAHSGSHGPKLENSPDWCCSDA, TRPSSRSLTEENSATESKIASI, and NEEEIKDAGPANNKDWHRKSKEADRQYDIPPQHRLPKQ. The segment covering 461–480 has biased composition (polar residues); sequence SCTSGQHSSDTSSVGTQTEQ. The span at 576–588 shows a compositional bias: basic and acidic residues; it reads KGDKCNRPENVHH. Phosphoserine is present on S712. The chain crosses the membrane as a helical span at residues 893-913; that stretch reads IAALITAAACTVILVIVVPIC. Over 914-917 the chain is Extracellular; the sequence is TMKS.

The protein belongs to the MINAR family. Interacts with NOTCH2; this interaction increases MINAR1 stability. Interacts (via N-terminus) with DEPTOR (via PDZ domain); this interaction may stabilize DEPTOR protein by impairing its ubiquitination. In terms of tissue distribution, expressed in brain and in islets of Langerhans.

The protein resides in the cell membrane. Its function is as follows. Intrinsically disordered protein which may negatively regulate mTOR signaling pathway by stabilizing the mTOR complex component DEPTOR. Negatively regulates angiogenesis. Negatively regulates cell growth. Negatively regulates neurite outgrowth in hippocampal neurons. The chain is Major intrinsically disordered Notch2-binding receptor 1 (Minar1) from Mus musculus (Mouse).